The following is a 322-amino-acid chain: Probable F-box protein At1g60180 (322 aa).

An F-box domain is found at 45-88 (FCELSDECIAKILSGCPILESLTLSHCIYLTVLDLSKSLRLRTL).

The chain is Probable F-box protein At1g60180 from Arabidopsis thaliana (Mouse-ear cress).